The following is a 206-amino-acid chain: Thymidylate kinase (206 aa).

10–17 (GVDGVGKT) contacts ATP.

This sequence belongs to the thymidylate kinase family.

The enzyme catalyses dTMP + ATP = dTDP + ADP. Functionally, phosphorylation of dTMP to form dTDP in both de novo and salvage pathways of dTTP synthesis. This Bifidobacterium longum (strain NCC 2705) protein is Thymidylate kinase.